The primary structure comprises 319 residues: sn-1-specific diacylglycerol lipase ABHD11 (319 aa).

The N-terminal 28 residues, Met-1–Tyr-28, are a transit peptide targeting the mitochondrion. Residues Pro-69–Lys-304 form the AB hydrolase-1 domain. Catalysis depends on charge relay system residues Ser-143, Glu-239, and His-298.

This sequence belongs to the AB hydrolase superfamily. In terms of processing, phosphorylated.

The protein localises to the mitochondrion. It is found in the mitochondrion matrix. It carries out the reaction 1-octadecanoyl-2-(5Z,8Z,11Z,14Z-eicosatetraenoyl)-sn-glycerol + H2O = 2-(5Z,8Z,11Z,14Z-eicosatetraenoyl)-glycerol + octadecanoate + H(+). The catalysed reaction is a 1,2-diacyl-sn-glycerol + H2O = a 2-acylglycerol + a fatty acid + H(+). It catalyses the reaction a 1,3-diacyl-sn-glycerol + H2O = a 1-acyl-sn-glycerol + a fatty acid + H(+). The enzyme catalyses 1-octadecanoyl-2-(9Z-octadecenoyl)-sn-glycerol + H2O = 2-(9Z-octadecenoyl)-glycerol + octadecanoate + H(+). It carries out the reaction 1-octadecanoyl-2-(4Z,7Z,10Z,13Z,16Z,19Z-docosahexaenoyl)-sn-glycerol + H2O = 2-(4Z,7Z,10Z,13Z,16Z,19Z-docosahexaenoyl)-glycerol + octadecanoate + H(+). The catalysed reaction is 1,2-didecanoylglycerol + H2O = decanoylglycerol + decanoate + H(+). Functionally, catalyzes the hydrolysis of diacylglycerol in vitro and may function as a key regulator in lipid metabolism, namely by regulating the intracellular levels of diacylglycerol. 1,2-diacyl-sn-glycerols are the preferred substrate over 1,3-diacyl-sn-glycerols. The enzyme hydrolyzes stearate in preference to palmitate from the sn-1 position of 1,2-diacyl-sn-glycerols. The chain is sn-1-specific diacylglycerol lipase ABHD11 from Xenopus tropicalis (Western clawed frog).